We begin with the raw amino-acid sequence, 143 residues long: MSAVPSVQTFGKKKSATAVAHVKAGKGLIKVNGSPITLVEPEILRFKVYEPLLLVGLDKFSNIDIRVRVTGGGHVSQVYAIRQAIAKGLVAYHQKYVDEQSKNELKKAFTSYDRTLLIADSRRPEPKKFGGKGARSRFQKSYR.

Position 2 is an N-acetylserine (serine 2). Residue lysine 30 forms a Glycyl lysine isopeptide (Lys-Gly) (interchain with G-Cter in ubiquitin) linkage. Residue serine 34 is modified to Phosphoserine. Glycyl lysine isopeptide (Lys-Gly) (interchain with G-Cter in ubiquitin) cross-links involve residues lysine 47 and lysine 59. Phosphoserine is present on serine 61. Threonine 70 is modified (phosphothreonine). Serine 76 is modified (phosphoserine). Positions 123–143 are disordered; it reads RPEPKKFGGKGARSRFQKSYR. Over residues 134–143 the composition is skewed to basic residues; sequence ARSRFQKSYR.

The protein belongs to the universal ribosomal protein uS9 family. Component of the small ribosomal subunit (SSU). Mature yeast ribosomes consist of a small (40S) and a large (60S) subunit. The 40S small subunit contains 1 molecule of ribosomal RNA (18S rRNA) and 33 different proteins (encoded by 57 genes). The large 60S subunit contains 3 rRNA molecules (25S, 5.8S and 5S rRNA) and 46 different proteins (encoded by 81 genes).

The protein localises to the cytoplasm. In terms of biological role, component of the ribosome, a large ribonucleoprotein complex responsible for the synthesis of proteins in the cell. The small ribosomal subunit (SSU) binds messenger RNAs (mRNAs) and translates the encoded message by selecting cognate aminoacyl-transfer RNA (tRNA) molecules. The large subunit (LSU) contains the ribosomal catalytic site termed the peptidyl transferase center (PTC), which catalyzes the formation of peptide bonds, thereby polymerizing the amino acids delivered by tRNAs into a polypeptide chain. The nascent polypeptides leave the ribosome through a tunnel in the LSU and interact with protein factors that function in enzymatic processing, targeting, and the membrane insertion of nascent chains at the exit of the ribosomal tunnel. In Saccharomyces cerevisiae (strain ATCC 204508 / S288c) (Baker's yeast), this protein is Small ribosomal subunit protein uS9A.